Consider the following 119-residue polypeptide: MARVKRGVTTHARHKKVLKLAKGYRGRSSKCYRIALERVEKALRYAYRDRRNRKRDFRGLWIQRINAGARLHGLTYSKFMHGLKRAGIEVDRKVLSDIAAREPESFKALVEQAQKALAA.

The protein belongs to the bacterial ribosomal protein bL20 family.

Functionally, binds directly to 23S ribosomal RNA and is necessary for the in vitro assembly process of the 50S ribosomal subunit. It is not involved in the protein synthesizing functions of that subunit. This is Large ribosomal subunit protein bL20 from Rhodospirillum centenum (strain ATCC 51521 / SW).